Here is a 243-residue protein sequence, read N- to C-terminus: Carboxy-S-adenosyl-L-methionine synthase (243 aa).

S-adenosyl-L-methionine is bound by residues tyrosine 39, 64 to 66 (GCS), 90 to 91 (DN), 118 to 119 (DL), asparagine 133, and arginine 200.

This sequence belongs to the class I-like SAM-binding methyltransferase superfamily. Cx-SAM synthase family. Homodimer.

The enzyme catalyses prephenate + S-adenosyl-L-methionine = carboxy-S-adenosyl-L-methionine + 3-phenylpyruvate + H2O. Functionally, catalyzes the conversion of S-adenosyl-L-methionine (SAM) to carboxy-S-adenosyl-L-methionine (Cx-SAM). The chain is Carboxy-S-adenosyl-L-methionine synthase from Idiomarina loihiensis (strain ATCC BAA-735 / DSM 15497 / L2-TR).